An 852-amino-acid chain; its full sequence is Mannosyl-oligosaccharide glucosidase GCS1 (852 aa).

The tract at residues 1-31 is disordered; sequence MTGASRRSARGRIKSSSLSPGSDEGSAYPPS. The Cytoplasmic segment spans residues 1–51; that stretch reads MTGASRRSARGRIKSSSLSPGSDEGSAYPPSIRRGKGKELVSIGAFKTNLK. Residues 6-12 carry the Endoplasmic reticulum targeting motif; it reads RRSARGR. Residues 15–26 show a composition bias toward low complexity; the sequence is SSSLSPGSDEGS. A helical; Signal-anchor for type II membrane protein transmembrane segment spans residues 52 to 72; it reads ILVGLIILGIIVIYFVINRLV. At 73–852 the chain is on the lumenal side; it reads RHGLLFDESQ…LIMSEDYPIF (780 aa). The tract at residues 91–150 is required for endoplasmic reticulum targeting; the sequence is PAPKVMDLSMFQGEHKESLYWGTYRPHVYFGVRARTPLSLVAGLMWLGVKDEMYVMRHFC. N-linked (GlcNAc...) asparagine glycans are attached at residues Asn-282, Asn-552, and Asn-570. Residues 574-583 are compositionally biased toward polar residues; that stretch reads QELNPKTLSS. The tract at residues 574 to 593 is disordered; sequence QELNPKTLSSGLDDYPRASH. The Proton donor role is filled by Asp-586. N-linked (GlcNAc...) asparagine glycans are attached at residues Asn-633, Asn-662, and Asn-730. The Proton acceptor role is filled by Glu-819.

It belongs to the glycosyl hydrolase 63 family. Constitutively expressed in roots, stems, leaves, flowers and siliques.

The protein localises to the endoplasmic reticulum membrane. It catalyses the reaction N(4)-(alpha-D-Glc-(1-&gt;2)-alpha-D-Glc-(1-&gt;3)-alpha-D-Glc-(1-&gt;3)-alpha-D-Man-(1-&gt;2)-alpha-D-Man-(1-&gt;2)-alpha-D-Man-(1-&gt;3)-[alpha-D-Man-(1-&gt;2)-alpha-D-Man-(1-&gt;3)-[alpha-D-Man-(1-&gt;2)-alpha-D-Man-(1-&gt;6)]-alpha-D-Man-(1-&gt;6)]-beta-D-Man-(1-&gt;4)-beta-D-GlcNAc-(1-&gt;4)-beta-D-GlcNAc)-L-asparaginyl-[protein] + H2O = N(4)-(alpha-D-Glc-(1-&gt;3)-alpha-D-Glc-(1-&gt;3)-alpha-D-Man-(1-&gt;2)-alpha-D-Man-(1-&gt;2)-alpha-D-Man-(1-&gt;3)-[alpha-D-Man-(1-&gt;2)-alpha-D-Man-(1-&gt;3)-[alpha-D-Man-(1-&gt;2)-alpha-D-Man-(1-&gt;6)]-alpha-D-Man-(1-&gt;6)]-beta-D-Man-(1-&gt;4)-beta-D-GlcNAc-(1-&gt;4)-beta-D-GlcNAc)-L-asparaginyl-[protein] + beta-D-glucose. It participates in glycan metabolism; N-glycan degradation. In terms of biological role, cleaves the distal alpha 1,2-linked glucose residue from the Glc(3)Man(9)GlcNAc(2) oligosaccharide precursor. Required for the accumulation of seed storage proteins, the formation of protein bodies, cell differentiation, cellulose biosynthesis and organization (in cell walls), cell shape determination and organization (e.g. epidermal cells), and embryo development. Involved in root development. The sequence is that of Mannosyl-oligosaccharide glucosidase GCS1 (GCS1) from Arabidopsis thaliana (Mouse-ear cress).